The following is a 308-amino-acid chain: Polyprenyl-phosphate transporter (308 aa).

The next 8 helical transmembrane spans lie at 15-35 (GLAM…IAFI), 69-89 (INGL…ATLA), 91-111 (LISW…FGLI), 130-150 (LLWL…KPLH), 163-183 (AIAI…LLLI), 200-220 (ILLI…HILS), 228-248 (DVTL…IWPW), and 282-302 (PSQW…VLGL).

The protein belongs to the PopT family.

It localises to the cell inner membrane. Active in alkaline conditions. Its function is as follows. Flippase that catalyzes the transport of undecaprenyl phosphate (UndP) across the cytoplasmic membrane, from the external side to the cytoplasmic side. Is involved in UndP recycling during peptidoglycan synthesis. Required for cell shape maintenance at alkaline pH and peptidoglycan maintenance. Required by the cholera pathogen for growth and cell shape maintenance in the intestine. The sequence is that of Polyprenyl-phosphate transporter from Vibrio cholerae serotype O1 (strain ATCC 39315 / El Tor Inaba N16961).